Consider the following 205-residue polypeptide: Protein TK0174 (205 aa).

The AMMECR1 domain occupies 7–201 (EWGEFLVRLA…EEYPRGPVRR (195 aa)).

The polypeptide is Protein TK0174 (Thermococcus kodakarensis (strain ATCC BAA-918 / JCM 12380 / KOD1) (Pyrococcus kodakaraensis (strain KOD1))).